The primary structure comprises 557 residues: CDP-diacylglycerol--glycerol-3-phosphate 3-phosphatidyltransferase, mitochondrial (557 aa).

The N-terminal 25 residues, 1-25, are a transit peptide targeting the mitochondrion; that stretch reads MAAAGGAALWRRLAAWLPRGPPGLA. 121 to 128 provides a ligand contact to ATP; it reads ASLYLGTG. One can recognise a PLD phosphodiesterase 1 domain in the interval 212–238; the sequence is TIGLQHIKVYLFDDNVILSGANLSDLY. Active-site residues include His-217, Lys-219, and Asp-224. The disordered stretch occupies residues 322–346; it reads TFHSSQQGSSMLPQHDSEASEGLKP. Residues 323-333 are compositionally biased toward polar residues; it reads FHSSQQGSSML. Over residues 336–346 the composition is skewed to basic and acidic residues; that stretch reads HDSEASEGLKP. Positions 461–494 constitute a PLD phosphodiesterase 2 domain; that stretch reads AGWTFHAKGLWLYLAGSSLPCLTLIGSPNFGYRS.

This sequence belongs to the CDP-alcohol phosphatidyltransferase class-II family.

It is found in the mitochondrion. It carries out the reaction a CDP-1,2-diacyl-sn-glycerol + sn-glycerol 3-phosphate = a 1,2-diacyl-sn-glycero-3-phospho-(1'-sn-glycero-3'-phosphate) + CMP + H(+). It functions in the pathway phospholipid metabolism; phosphatidylglycerol biosynthesis; phosphatidylglycerol from CDP-diacylglycerol: step 1/2. Its activity is regulated as follows. Activated by calcium and magnesium and inhibited by other bivalent cations. In terms of biological role, functions in the biosynthesis of the anionic phospholipids phosphatidylglycerol and cardiolipin. This Gallus gallus (Chicken) protein is CDP-diacylglycerol--glycerol-3-phosphate 3-phosphatidyltransferase, mitochondrial (PGS1).